The primary structure comprises 442 residues: Lipoyl synthase, apicoplast (442 aa).

The first 25 residues, 1-25, serve as a signal peptide directing secretion; that stretch reads MHVLTPSLYIYAFFIVCVRLKCGRS. Residues 92–154 are disordered; sequence LLRSESATDE…EKKPDWFHVP (63 aa). Residues 109-127 show a composition bias toward basic and acidic residues; sequence LKEKLKESPANWGKDKQEE. [4Fe-4S] cluster contacts are provided by Cys177, Cys182, Cys188, Cys203, Cys207, Cys210, and Ser418. In terms of domain architecture, Radical SAM core spans 189–407; sequence WNIGTATIML…KEEGMKMGFK (219 aa).

This sequence belongs to the radical SAM superfamily. Lipoyl synthase family. The cofactor is [4Fe-4S] cluster.

Its subcellular location is the plastid. It localises to the apicoplast. The catalysed reaction is [[Fe-S] cluster scaffold protein carrying a second [4Fe-4S](2+) cluster] + N(6)-octanoyl-L-lysyl-[protein] + 2 oxidized [2Fe-2S]-[ferredoxin] + 2 S-adenosyl-L-methionine + 4 H(+) = [[Fe-S] cluster scaffold protein] + N(6)-[(R)-dihydrolipoyl]-L-lysyl-[protein] + 4 Fe(3+) + 2 hydrogen sulfide + 2 5'-deoxyadenosine + 2 L-methionine + 2 reduced [2Fe-2S]-[ferredoxin]. The protein operates within protein modification; protein lipoylation via endogenous pathway; protein N(6)-(lipoyl)lysine from octanoyl-[acyl-carrier-protein]: step 2/2. Its function is as follows. Catalyzes the radical-mediated insertion of two sulfur atoms into the C-6 and C-8 positions of the octanoyl moiety bound to the lipoyl domains of lipoate-dependent enzymes, thereby converting the octanoylated domains into lipoylated derivatives. The chain is Lipoyl synthase, apicoplast from Plasmodium vivax (strain Salvador I).